Reading from the N-terminus, the 132-residue chain is Cytochrome B5 isoform C (132 aa).

Residues 2–78 (ANLISFHDVA…MKKYCIGDVD (77 aa)) form the Cytochrome b5 heme-binding domain. Positions 37 and 61 each coordinate heme. Residues 110–129 (LLIYLIPLLILGVAFALRFY) form a helical membrane-spanning segment.

It belongs to the cytochrome b5 family. As to quaternary structure, interacts with CER1, BI-1, FAH1 and FAH2.

It localises to the endoplasmic reticulum membrane. Its function is as follows. Membrane bound hemoprotein which function as an electron carrier for several membrane bound oxygenases, including fatty acid desaturases. The protein is Cytochrome B5 isoform C of Arabidopsis thaliana (Mouse-ear cress).